Consider the following 230-residue polypeptide: Phosphatidylserine decarboxylase proenzyme (230 aa).

Residue Ser-186 is the Schiff-base intermediate with substrate; via pyruvic acid of the active site. A Pyruvic acid (Ser); by autocatalysis modification is found at Ser-186.

Belongs to the phosphatidylserine decarboxylase family. PSD-A subfamily. As to quaternary structure, heterodimer of a large membrane-associated beta subunit and a small pyruvoyl-containing alpha subunit. Requires pyruvate as cofactor. In terms of processing, is synthesized initially as an inactive proenzyme. Formation of the active enzyme involves a self-maturation process in which the active site pyruvoyl group is generated from an internal serine residue via an autocatalytic post-translational modification. Two non-identical subunits are generated from the proenzyme in this reaction, and the pyruvate is formed at the N-terminus of the alpha chain, which is derived from the carboxyl end of the proenzyme. The post-translation cleavage follows an unusual pathway, termed non-hydrolytic serinolysis, in which the side chain hydroxyl group of the serine supplies its oxygen atom to form the C-terminus of the beta chain, while the remainder of the serine residue undergoes an oxidative deamination to produce ammonia and the pyruvoyl prosthetic group on the alpha chain.

It is found in the cell membrane. It catalyses the reaction a 1,2-diacyl-sn-glycero-3-phospho-L-serine + H(+) = a 1,2-diacyl-sn-glycero-3-phosphoethanolamine + CO2. Its pathway is phospholipid metabolism; phosphatidylethanolamine biosynthesis; phosphatidylethanolamine from CDP-diacylglycerol: step 2/2. Functionally, catalyzes the formation of phosphatidylethanolamine (PtdEtn) from phosphatidylserine (PtdSer). This is Phosphatidylserine decarboxylase proenzyme from Wolbachia pipientis wMel.